A 252-amino-acid chain; its full sequence is Chitooligosaccharide deacetylase (252 aa).

2 residues coordinate Mg(2+): His-61 and His-125.

This sequence belongs to the YdjC deacetylase family. ChbG subfamily. Homodimer. Mg(2+) serves as cofactor.

The protein resides in the cytoplasm. The enzyme catalyses N,N'-diacetylchitobiose + H2O = N-acetyl-beta-D-glucosaminyl-(1-&gt;4)-D-glucosamine + acetate. It carries out the reaction diacetylchitobiose-6'-phosphate + H2O = N'-monoacetylchitobiose-6'-phosphate + acetate. It participates in glycan degradation; chitin degradation. In terms of biological role, involved in the degradation of chitin. ChbG is essential for growth on the acetylated chitooligosaccharides chitobiose and chitotriose but is dispensable for growth on cellobiose and chitosan dimer, the deacetylated form of chitobiose. Deacetylation of chitobiose-6-P and chitotriose-6-P is necessary for both the activation of the chb promoter by the regulatory protein ChbR and the hydrolysis of phosphorylated beta-glucosides by the phospho-beta-glucosidase ChbF. Catalyzes the removal of only one acetyl group from chitobiose-6-P to yield monoacetylchitobiose-6-P, the inducer of ChbR and the substrate of ChbF. The chain is Chitooligosaccharide deacetylase from Enterobacter sp. (strain 638).